A 150-amino-acid polypeptide reads, in one-letter code: General odorant-binding protein 19d (150 aa).

Positions 1–23 (MSHLVHLTVLLLVGILCLGATSA) are cleaved as a signal peptide. Cystine bridges form between Cys41/Cys72, Cys68/Cys126, and Cys116/Cys135.

Belongs to the PBP/GOBP family. As to expression, expressed in the antenna, mostly on the anterior surface of the third antennal segment. Also detected in the maxillary palps and in cells at the bases of the taste hairs on the proboscis and internal taste organs of the head.

It localises to the secreted. In Drosophila melanogaster (Fruit fly), this protein is General odorant-binding protein 19d (Obp19d).